We begin with the raw amino-acid sequence, 356 residues long: DNA integrity scanning protein DisA (356 aa).

The DAC domain maps to 11–149 (VHTMRDTLQR…EGKSHILEEP (139 aa)). ATP-binding positions include glycine 78, leucine 96, and 109–113 (TRHRS).

Belongs to the DisA family. As to quaternary structure, homooctamer. Mg(2+) serves as cofactor.

The enzyme catalyses 2 ATP = 3',3'-c-di-AMP + 2 diphosphate. Its function is as follows. Participates in a DNA-damage check-point. DisA forms globular foci that rapidly scan along the chromosomes searching for lesions. Also has diadenylate cyclase activity, catalyzing the condensation of 2 ATP molecules into cyclic di-AMP (c-di-AMP). c-di-AMP likely acts as a signaling molecule that may couple DNA integrity with a cellular process. This is DNA integrity scanning protein DisA from Corynebacterium efficiens (strain DSM 44549 / YS-314 / AJ 12310 / JCM 11189 / NBRC 100395).